A 2690-amino-acid chain; its full sequence is Probable polyketide synthase 28 (2690 aa).

One can recognise a Ketosynthase family 3 (KS3) domain in the interval 15-443 (YGDVAVIGIG…GSNVCLILSE (429 aa)). Catalysis depends on for beta-ketoacyl synthase activity residues Cys-187, His-326, and His-366. The tract at residues 651-684 (GVSADIIVGHSLGELSSSYSSGMIDFETLCHLIY) is acyl/malonyl transferases. Ser-661 functions as the For acyl/malonyl transferase activity in the catalytic mechanism. Positions 906 to 934 (NFKSQLTNINNNNNNINNNNNNNNNNNNN) form a coiled coil. A disordered region spans residues 916 to 946 (NNNNNINNNNNNNNNNNNNNNNNNNNNNNNN). Residues 973 to 1102 (HEKITNEGPS…GNFSLFKHNS (130 aa)) form an N-terminal hotdog fold region. Residues 973–1285 (HEKITNEGPS…CSSVSLANPS (313 aa)) enclose the PKS/mFAS DH domain. Residue His-1014 is the Proton acceptor; for dehydratase activity of the active site. The segment at 1119–1285 (NFTTISKHDF…CSSVSLANPS (167 aa)) is C-terminal hotdog fold. Asp-1188 (proton donor; for dehydratase activity) is an active-site residue. Residues 1401–1429 (LNHHNNSENKNKNNNNNNNSNNNENSNNE) are disordered. Residues 1412 to 1429 (KNNNNNNNSNNNENSNNE) are compositionally biased toward low complexity. The 78-residue stretch at 2594–2671 (SDNEFIHSTI…QSIDIIKFGY (78 aa)) folds into the Carrier domain. O-(pantetheine 4'-phosphoryl)serine is present on Ser-2631.

Pantetheine 4'-phosphate is required as a cofactor.

In terms of biological role, probable polyketide synthase. The sequence is that of Probable polyketide synthase 28 (pks28) from Dictyostelium discoideum (Social amoeba).